Here is a 444-residue protein sequence, read N- to C-terminus: Ribitol-5-phosphate xylosyltransferase 1 (444 aa).

At 1-9 (MRLTRTRLC) the chain is on the cytoplasmic side. The helical; Signal-anchor for type II membrane protein transmembrane segment at 10 to 30 (SLLVALYCLFSIYAAYHVFFG) threads the bilayer. Residues 31 to 444 (RRRRPLGTTS…ESSFFINNKV (414 aa)) lie on the Extracellular side of the membrane. Residues 38-79 (TTSRNSRKAAAAQAKERRGREQSALESEEWNPWEGDEKNEQR) form a disordered region. Over residues 51–60 (AKERRGREQS) the composition is skewed to basic and acidic residues.

Belongs to the RXYLT1 family. In terms of assembly, forms a complex composed of FKTN/fukutin, FKRP and RXYLT1/TMEM5.

Its subcellular location is the golgi apparatus membrane. It catalyses the reaction 3-O-[Rib-ol-P-Rib-ol-P-3-beta-D-GalNAc-(1-&gt;3)-beta-D-GlcNAc-(1-&gt;4)-(O-6-P-alpha-D-Man)]-Thr-[protein] + UDP-alpha-D-xylose = 3-O-[beta-D-Xyl-(1-&gt;4)-Rib-ol-P-Rib-ol-P-3-beta-D-GalNAc-(1-&gt;3)-beta-D-GlcNAc-(1-&gt;4)-(O-6-P-alpha-D-Man)]-Thr-[protein] + UDP + H(+). The protein operates within protein modification; protein glycosylation. Its function is as follows. Acts as a UDP-D-xylose:ribitol-5-phosphate beta1,4-xylosyltransferase, which catalyzes the transfer of UDP-D-xylose to ribitol 5-phosphate (Rbo5P) to form the Xylbeta1-4Rbo5P linkage on O-mannosyl glycan. Participates in the biosynthesis of the phosphorylated O-mannosyl trisaccharide (N-acetylgalactosamine-beta-3-N-acetylglucosamine-beta-4-(phosphate-6-)mannose), a carbohydrate structure present in alpha-dystroglycan (DAG1), which is required for binding laminin G-like domain-containing extracellular proteins with high affinity. This is Ribitol-5-phosphate xylosyltransferase 1 from Mus musculus (Mouse).